The sequence spans 255 residues: 5'-nucleotidase SurE (255 aa).

Residues D8, D9, S39, and N95 each coordinate a divalent metal cation.

The protein belongs to the SurE nucleotidase family. It depends on a divalent metal cation as a cofactor.

It localises to the cytoplasm. The enzyme catalyses a ribonucleoside 5'-phosphate + H2O = a ribonucleoside + phosphate. In terms of biological role, nucleotidase that shows phosphatase activity on nucleoside 5'-monophosphates. This chain is 5'-nucleotidase SurE, found in Thermosipho africanus (strain TCF52B).